Here is a 621-residue protein sequence, read N- to C-terminus: Replication factor A protein 1 (621 aa).

Ser2 carries the N-acetylserine modification. Residue Ser178 is modified to Phosphoserine; by ATM or ATR. Positions 197–284 form a DNA-binding region, OB; the sequence is WTIKARVSYK…PYELNLDRDT (88 aa). Residues 486 to 508 form a C4-type zinc finger; the sequence is CSNENCNKKVLEQPDGTWRCEKC.

It belongs to the replication factor A protein 1 family. In terms of assembly, component of the heterotrimeric canonical replication protein A complex (RPA). Interacts with POB3. The N-terminus is blocked.

The protein localises to the nucleus. As part of the replication protein A (RPA/RP-A), a single-stranded DNA-binding heterotrimeric complex, may play an essential role in DNA replication, recombination and repair. Binds and stabilizes single-stranded DNA intermediates, preventing complementary DNA reannealing and recruiting different proteins involved in DNA metabolism. Binds to single-stranded sequences participating in DNA replication in addition to those mediating transcriptional repression (URS1) and activation (CAR1). Stimulates the activity of a cognate strand exchange protein (SEP1). It cooperates with T-AG and DNA topoisomerase I to unwind template DNA containing the simian virus 40 origin of DNA replication. This is Replication factor A protein 1 (RFA1) from Saccharomyces cerevisiae (strain ATCC 204508 / S288c) (Baker's yeast).